A 318-amino-acid chain; its full sequence is Ribose-phosphate pyrophosphokinase 2 (318 aa).

96–101 is a binding site for ATP; sequence RQDKKD. Positions 128, 130, 139, and 143 each coordinate Mg(2+). His130 is a binding site for ATP. The tract at residues 212–227 is binding of phosphoribosylpyrophosphate; the sequence is KDRVAILVDDMADTCG.

Belongs to the ribose-phosphate pyrophosphokinase family. Homodimer. The active form is probably a hexamer composed of 3 homodimers. The cofactor is Mg(2+).

The enzyme catalyses D-ribose 5-phosphate + ATP = 5-phospho-alpha-D-ribose 1-diphosphate + AMP + H(+). It participates in metabolic intermediate biosynthesis; 5-phospho-alpha-D-ribose 1-diphosphate biosynthesis; 5-phospho-alpha-D-ribose 1-diphosphate from D-ribose 5-phosphate (route I): step 1/1. Activated by magnesium and inorganic phosphate. Competitively or non-competitively inhibited by ADP, 2,3-bisphosphoglyceride or GDP. Catalyzes the synthesis of phosphoribosylpyrophosphate (PRPP) that is essential for nucleotide synthesis. The polypeptide is Ribose-phosphate pyrophosphokinase 2 (prps2) (Xenopus laevis (African clawed frog)).